Consider the following 578-residue polypeptide: Peptidyl-prolyl cis-trans isomerase-like 2 (578 aa).

The U-box domain maps to R40 to D114. A disordered region spans residues K240–G260. The PPIase cyclophilin-type domain occupies A321–I475. A disordered region spans residues G505–W578. The span at K538 to V548 shows a compositional bias: polar residues. Residues A551 to E560 show a composition bias toward acidic residues. Over residues G569–W578 the composition is skewed to gly residues.

This sequence belongs to the cyclophilin-type PPIase family. PPIL2 subfamily.

The protein resides in the nucleus. It catalyses the reaction [protein]-peptidylproline (omega=180) = [protein]-peptidylproline (omega=0). The enzyme catalyses S-ubiquitinyl-[E2 ubiquitin-conjugating enzyme]-L-cysteine + [acceptor protein]-L-lysine = [E2 ubiquitin-conjugating enzyme]-L-cysteine + N(6)-ubiquitinyl-[acceptor protein]-L-lysine.. It participates in protein modification; protein ubiquitination. In terms of biological role, may catalyze the cis-trans isomerization of proline imidic peptide bonds in oligopeptides thereby assisting the folding of proteins. May also function as a chaperone, playing a role in intracellular transport of proteins. May also have a protein ubiquitin ligase activity acting as an E3 ubiquitin protein ligase or as a ubiquitin-ubiquitin ligase promoting elongation of ubiquitin chains on proteins. This Gibberella zeae (strain ATCC MYA-4620 / CBS 123657 / FGSC 9075 / NRRL 31084 / PH-1) (Wheat head blight fungus) protein is Peptidyl-prolyl cis-trans isomerase-like 2 (CYP8).